Reading from the N-terminus, the 373-residue chain is 4-hydroxy-3-methylbut-2-en-1-yl diphosphate synthase (flavodoxin) (373 aa).

Positions 270, 273, 305, and 312 each coordinate [4Fe-4S] cluster.

The protein belongs to the IspG family. It depends on [4Fe-4S] cluster as a cofactor.

The enzyme catalyses (2E)-4-hydroxy-3-methylbut-2-enyl diphosphate + oxidized [flavodoxin] + H2O + 2 H(+) = 2-C-methyl-D-erythritol 2,4-cyclic diphosphate + reduced [flavodoxin]. It functions in the pathway isoprenoid biosynthesis; isopentenyl diphosphate biosynthesis via DXP pathway; isopentenyl diphosphate from 1-deoxy-D-xylulose 5-phosphate: step 5/6. In terms of biological role, converts 2C-methyl-D-erythritol 2,4-cyclodiphosphate (ME-2,4cPP) into 1-hydroxy-2-methyl-2-(E)-butenyl 4-diphosphate. The protein is 4-hydroxy-3-methylbut-2-en-1-yl diphosphate synthase (flavodoxin) of Erwinia tasmaniensis (strain DSM 17950 / CFBP 7177 / CIP 109463 / NCPPB 4357 / Et1/99).